A 259-amino-acid polypeptide reads, in one-letter code: Imidazole glycerol phosphate synthase subunit HisF (259 aa).

Catalysis depends on residues Asp-11 and Asp-130.

It belongs to the HisA/HisF family. Heterodimer of HisH and HisF.

The protein localises to the cytoplasm. The enzyme catalyses 5-[(5-phospho-1-deoxy-D-ribulos-1-ylimino)methylamino]-1-(5-phospho-beta-D-ribosyl)imidazole-4-carboxamide + L-glutamine = D-erythro-1-(imidazol-4-yl)glycerol 3-phosphate + 5-amino-1-(5-phospho-beta-D-ribosyl)imidazole-4-carboxamide + L-glutamate + H(+). The protein operates within amino-acid biosynthesis; L-histidine biosynthesis; L-histidine from 5-phospho-alpha-D-ribose 1-diphosphate: step 5/9. Its function is as follows. IGPS catalyzes the conversion of PRFAR and glutamine to IGP, AICAR and glutamate. The HisF subunit catalyzes the cyclization activity that produces IGP and AICAR from PRFAR using the ammonia provided by the HisH subunit. This Polaromonas naphthalenivorans (strain CJ2) protein is Imidazole glycerol phosphate synthase subunit HisF.